A 567-amino-acid chain; its full sequence is Glucose-6-phosphate isomerase, cytosolic (567 aa).

The active-site Proton donor is the Glu360. Catalysis depends on residues His391 and Lys516.

Belongs to the GPI family. In terms of assembly, homodimer.

The protein resides in the cytoplasm. The catalysed reaction is alpha-D-glucose 6-phosphate = beta-D-fructose 6-phosphate. Its pathway is carbohydrate degradation; glycolysis; D-glyceraldehyde 3-phosphate and glycerone phosphate from D-glucose: step 2/4. This Zea mays (Maize) protein is Glucose-6-phosphate isomerase, cytosolic (PHI1).